The chain runs to 103 residues: MSNRRLFLKSIPIMAAAGAVGMAGLARAANPMVAETDPQAAALGYKADTTKVDQAKYPKHAPDQHCGNCALYQGGTAAQGGCPLFAGKDVANKGWCSAWAKKA.

The N-terminal stretch at Met1–Ala28 is a signal peptide. [4Fe-4S] cluster is bound by residues Cys66, Cys69, Cys82, and Cys96.

This sequence belongs to the high-potential iron-sulfur protein (HiPIP) family. As to quaternary structure, homodimer.

It is found in the periplasm. In terms of biological role, specific class of high-redox-potential 4Fe-4S ferredoxins. Functions in anaerobic electron transport in most purple and in some other photosynthetic bacteria and in at least one genus (Paracoccus) of halophilic, denitrifying bacteria. This Ralstonia nicotianae (strain ATCC BAA-1114 / GMI1000) (Ralstonia solanacearum) protein is High-potential iron-sulfur protein (hip).